Consider the following 271-residue polypeptide: Aminoglycoside 3'-phosphotransferase (271 aa).

Asp-198 functions as the Proton acceptor in the catalytic mechanism.

Belongs to the aminoglycoside phosphotransferase family.

The enzyme catalyses kanamycin A + ATP = kanamycin 3'-phosphate + ADP + H(+). Its function is as follows. Resistance to kanamycin and structurally-related aminoglycosides, including amikacin. The sequence is that of Aminoglycoside 3'-phosphotransferase from Salmonella typhimurium.